The primary structure comprises 83 residues: Cytochrome b559 subunit alpha (83 aa).

The helical transmembrane segment at 21–35 threads the bilayer; that stretch reads VIHSITIPSLFIAGW. Residue histidine 23 participates in heme binding.

It belongs to the PsbE/PsbF family. As to quaternary structure, heterodimer of an alpha subunit and a beta subunit. PSII is composed of 1 copy each of membrane proteins PsbA, PsbB, PsbC, PsbD, PsbE, PsbF, PsbH, PsbI, PsbJ, PsbK, PsbL, PsbM, PsbT, PsbX, PsbY, PsbZ, Psb30/Ycf12, at least 3 peripheral proteins of the oxygen-evolving complex and a large number of cofactors. It forms dimeric complexes. Heme b serves as cofactor.

The protein localises to the plastid. Its subcellular location is the chloroplast thylakoid membrane. This b-type cytochrome is tightly associated with the reaction center of photosystem II (PSII). PSII is a light-driven water:plastoquinone oxidoreductase that uses light energy to abstract electrons from H(2)O, generating O(2) and a proton gradient subsequently used for ATP formation. It consists of a core antenna complex that captures photons, and an electron transfer chain that converts photonic excitation into a charge separation. In Oenothera berteroana (Bertero's evening primrose), this protein is Cytochrome b559 subunit alpha.